The chain runs to 396 residues: Elongation factor Tu (396 aa).

A tr-type G domain is found at 10–206 (KPHVNVGTIG…TMDSYIPEPV (197 aa)). The interval 19–26 (GHVDHGKT) is G1. 19-26 (GHVDHGKT) contributes to the GTP binding site. Thr26 serves as a coordination point for Mg(2+). Residues 60 to 64 (GITIS) are G2. The interval 81-84 (DCPG) is G3. GTP-binding positions include 81–85 (DCPGH) and 136–139 (NKAD). A G4 region spans residues 136 to 139 (NKAD). Residues 174 to 176 (SAL) are G5.

This sequence belongs to the TRAFAC class translation factor GTPase superfamily. Classic translation factor GTPase family. EF-Tu/EF-1A subfamily. In terms of assembly, monomer.

Its subcellular location is the cytoplasm. The catalysed reaction is GTP + H2O = GDP + phosphate + H(+). Its function is as follows. GTP hydrolase that promotes the GTP-dependent binding of aminoacyl-tRNA to the A-site of ribosomes during protein biosynthesis. The polypeptide is Elongation factor Tu (Legionella pneumophila (strain Paris)).